Here is a 945-residue protein sequence, read N- to C-terminus: Splicing factor, suppressor of white-apricot homolog (945 aa).

Disordered stretches follow at residues 1–28 (MYGA…GTGT) and 156–185 (DYYD…EENE). 2 stretches are compositionally biased toward basic and acidic residues: residues 9-21 (AKPE…KEEA) and 169-178 (PSKQREKNEA). The stretch at 211-253 (IIERTANFVCKQGAQFEIMLKAKQARNSQFDFLRFDHYLNPYY) is one SURP motif 1 repeat. The segment at 271–301 (SKNEEKKKSGPTSDNEEEDDEEDGSYLHPSL) is disordered. A Phosphoserine modification is found at S283. The span at 284–294 (DNEEEDDEEDG) shows a compositional bias: acidic residues. K315 carries the N6-acetyllysine modification. Disordered stretches follow at residues 332–355 (KAQA…PSQV) and 403–448 (SSSP…PVAI). The span at 335-352 (ADSSAPAPPTADGTPAQP) shows a compositional bias: low complexity. Residues 412–426 (VPPPPGTTPPPPPTT) show a composition bias toward pro residues. A compositionally biased stretch (low complexity) spans 427–447 (AEPSSGVTSTTTTTSALAPVA). Residues 458-498 (VIDKLAEYVARNGLKFETSVRAKNDQRFEFLQPWHQYNAYY) form an SURP motif 2 repeat. Disordered stretches follow at residues 512–564 (GSTQ…KSTV), 589–680 (PLEK…QAER), and 712–921 (DTGV…VQSK). The segment covering 514 to 527 (TQAASTAEEAPTET) has biased composition (low complexity). A compositionally biased stretch (acidic residues) spans 528 to 540 (AVEESGEAGEDGA). Over residues 589–598 (PLEKNRVKLD) the composition is skewed to basic and acidic residues. Phosphoserine is present on residues S601 and S621. Low complexity predominate over residues 615–630 (SSVANPSPAAAPPSVA). Positions 632-686 (EEKKPQLTQEELEAKQAKQKLEDRLAAAAREKLAQASKESKEKQLQAERKRKAAL) form a coiled coil. A Phosphothreonine modification is found at T639. Composition is skewed to basic and acidic residues over residues 643–679 (LEAK…LQAE) and 733–752 (KPPE…EERE). 2 stretches are compositionally biased toward basic residues: residues 753–787 (KKKK…KAKH) and 795–810 (TVRR…RRRA). The span at 811–821 (HSPERRREERS) shows a compositional bias: basic and acidic residues. Phosphoserine occurs at positions 829 and 831. The span at 835 to 861 (SRKRTRSRSPHEKKKKRRSRSRTKAKA) shows a compositional bias: basic residues. Positions 871-894 (QAAQRPSAHSAHSASISPVESRGS) are enriched in low complexity. Basic and acidic residues predominate over residues 895-908 (SQERSRGVSQEKDG). Residues S899 and S903 each carry the phosphoserine modification. Residues 909–920 (QISSAIVSSVQS) are compositionally biased toward low complexity.

The protein localises to the nucleus. Functionally, plays a role as an alternative splicing regulator. Regulates its own expression at the level of RNA processing. Also regulates the splicing of fibronectin and CD45 genes. May act, at least in part, by interaction with other R/S-containing splicing factors. Represses the splicing of MAPT/Tau exon 10. In Mus musculus (Mouse), this protein is Splicing factor, suppressor of white-apricot homolog (Sfswap).